We begin with the raw amino-acid sequence, 106 residues long: Large ribosomal subunit protein P2A (106 aa).

Residue K2 forms a Glycyl lysine isopeptide (Lys-Gly) (interchain with G-Cter in ubiquitin) linkage. Phosphothreonine is present on T16. 2 positions are modified to phosphoserine: S40 and S43. K48 is covalently cross-linked (Glycyl lysine isopeptide (Lys-Gly) (interchain with G-Cter in ubiquitin)). Phosphoserine is present on S49. Residues 65 to 82 (PAAGPASAGGAAAASGDA) are compositionally biased toward low complexity. A disordered region spans residues 65–106 (PAAGPASAGGAAAASGDAAAEEEKEEEAAEESDDDMGFGLFD). The segment covering 83-100 (AAEEEKEEEAAEESDDDM) has biased composition (acidic residues). S96 bears the Phosphoserine mark.

The protein belongs to the eukaryotic ribosomal protein P1/P2 family. As to quaternary structure, component of the large ribosomal subunit (LSU). Mature yeast ribosomes consist of a small (40S) and a large (60S) subunit. The 40S small subunit contains 1 molecule of ribosomal RNA (18S rRNA) and 33 different proteins (encoded by 57 genes). The large 60S subunit contains 3 rRNA molecules (25S, 5.8S and 5S rRNA) and 46 different proteins (encoded by 81 genes). The 5 acidic ribosomal P-proteins form the stalk structure of the 60S subunit. They are organized as a pentameric complex in which uL10/P0 interacts with 2 heterodimers, P1A-P2B and P1B-P2A. In terms of processing, phosphorylation is not involved in the interaction of the acidic P proteins with the ribosome, however it is suggested to affect the ribosome activity and to participate in a possible ribosome regulatory mechanism. Post-translationally, the N-terminus is not modified.

It localises to the cytoplasm. Component of the ribosome, a large ribonucleoprotein complex responsible for the synthesis of proteins in the cell. The small ribosomal subunit (SSU) binds messenger RNAs (mRNAs) and translates the encoded message by selecting cognate aminoacyl-transfer RNA (tRNA) molecules. The large subunit (LSU) contains the ribosomal catalytic site termed the peptidyl transferase center (PTC), which catalyzes the formation of peptide bonds, thereby polymerizing the amino acids delivered by tRNAs into a polypeptide chain. The nascent polypeptides leave the ribosome through a tunnel in the LSU and interact with protein factors that function in enzymatic processing, targeting, and the membrane insertion of nascent chains at the exit of the ribosomal tunnel. The protein is Large ribosomal subunit protein P2A of Saccharomyces cerevisiae (strain ATCC 204508 / S288c) (Baker's yeast).